Here is a 357-residue protein sequence, read N- to C-terminus: MNDKIAIIGAGSWGTAVACSLGKNGHRVVLWSHTAGVADSINTEHINVKYLPKHKLPKTVSASTDMEEVCKDASFIFLASPSLYLTSAVEELLKFAPFSHDDGEMPYPTIAVLTKGFIPDENGEPQFIIDVLEKMLPDFYKNHLVYVAGPSHGEEVAEGKLTGLIAASQNPMCSIRCREILRSRSLLVYSSLDIIGVQVCAAAKNVVAVAFGVLDALTVTSDIFGDNTESLLLAAGLNEIQTIGRAMGATHPETFTSISGVGDLDVTCRSKYGRNRRFGNEIITKKILLSFENLDDLIKNIDKIGYLPEGVVACKYLNILAEKRNLKLPICSGLYKILNKELKPLDLIENLLQGDTK.

Residues Ser-12, Trp-13, His-33, and Lys-115 each coordinate NADPH. Sn-glycerol 3-phosphate is bound by residues Lys-115, Gly-149, and Ser-151. Gly-153 contributes to the NADPH binding site. Sn-glycerol 3-phosphate is bound by residues Lys-204, Asp-263, Arg-274, and Asn-275. The active-site Proton acceptor is Lys-204. Residue Arg-274 coordinates NADPH. NADPH is bound by residues Leu-307 and Glu-309.

The protein belongs to the NAD-dependent glycerol-3-phosphate dehydrogenase family.

Its subcellular location is the cytoplasm. The enzyme catalyses sn-glycerol 3-phosphate + NAD(+) = dihydroxyacetone phosphate + NADH + H(+). It carries out the reaction sn-glycerol 3-phosphate + NADP(+) = dihydroxyacetone phosphate + NADPH + H(+). Its pathway is membrane lipid metabolism; glycerophospholipid metabolism. Catalyzes the reduction of the glycolytic intermediate dihydroxyacetone phosphate (DHAP) to sn-glycerol 3-phosphate (G3P), the key precursor for phospholipid synthesis. The sequence is that of Glycerol-3-phosphate dehydrogenase [NAD(P)+] from Treponema denticola (strain ATCC 35405 / DSM 14222 / CIP 103919 / JCM 8153 / KCTC 15104).